A 1224-amino-acid chain; its full sequence is A disintegrin and metalloproteinase with thrombospondin motifs 16 (1224 aa).

Residues 1–24 (MKPRARGWRGLAALWMLLAQVAEQ) form the signal peptide. A propeptide spanning residues 25 to 279 (APACAMGPAA…EYKSCLRHKR (255 aa)) is cleaved from the precursor. The segment at 31–53 (GPAAAAPGSPSVPRPPPPAERPG) is disordered. Residues 40–50 (PSVPRPPPPAE) are compositionally biased toward pro residues. N-linked (GlcNAc...) asparagine glycosylation occurs at Asn-156. The short motif at 247–254 (HFCGRRKK) is the Cysteine switch element. Cys-249 provides a ligand contact to Zn(2+). A Peptidase M12B domain is found at 290–495 (LNVETLVVVD…AQAICLADQP (206 aa)). Asn-310 is a glycosylation site (N-linked (GlcNAc...) asparagine). 11 disulfide bridges follow: Cys-366-Cys-417, Cys-392-Cys-399, Cys-411-Cys-490, Cys-450-Cys-474, Cys-518-Cys-543, Cys-529-Cys-550, Cys-538-Cys-569, Cys-563-Cys-574, Cys-598-Cys-635, Cys-602-Cys-640, and Cys-613-Cys-625. A Zn(2+)-binding site is contributed by His-433. Glu-434 is an active-site residue. Residues His-437 and His-443 each coordinate Zn(2+). In terms of domain architecture, Disintegrin spans 496-585 (KPVKEYKYPE…KYGDEGPKPT (90 aa)). Residues 586 to 641 (HGHWSDWSSWSPCSRTCGGGVSHRSRLCTNPKPSHGGKFCEGSTRTLKLCNSQKCP) form the TSP type-1 1 domain. Asn-741, Asn-780, Asn-835, Asn-905, and Asn-935 each carry an N-linked (GlcNAc...) asparagine glycan. The segment at 747–873 (IHRGLYTKHH…KQPPAQPSYT (127 aa)) is spacer. 5 consecutive TSP type-1 domains span residues 874 to 922 (WAIV…LVPC), 927 to 987 (CPPS…QSCP), 988 to 1048 (PAWS…QRCH), 1051 to 1115 (KKLQ…LPCP), and 1127 to 1181 (RGSW…HFCP). Cystine bridges form between Cys-939–Cys-981, Cys-943–Cys-986, and Cys-954–Cys-970. The region spanning 1186–1223 (KDAFCKDYFHWCYLVPQHGMCSHKFYGKQCCKTCSKSN) is the PLAC domain.

The cofactor is Zn(2+). In terms of processing, the precursor is cleaved by a furin endopeptidase. Glycosylated. Can be O-fucosylated by POFUT2 on a serine or a threonine residue found within the consensus sequence C1-X(2)-(S/T)-C2-G of the TSP type-1 repeat domains where C1 and C2 are the first and second cysteine residue of the repeat, respectively. Fucosylated repeats can then be further glycosylated by the addition of a beta-1,3-glucose residue by the glucosyltransferase, B3GALTL. Fucosylation mediates the efficient secretion of ADAMTS family members. Can also be C-glycosylated with one or two mannose molecules on tryptophan residues within the consensus sequence W-X-X-W of the TPRs, and N-glycosylated. These other glycosylations can also facilitate secretion. Expressed in fetal lung and kidney and in adult prostate and ovary.

It is found in the secreted. The protein localises to the extracellular space. It localises to the extracellular matrix. In Homo sapiens (Human), this protein is A disintegrin and metalloproteinase with thrombospondin motifs 16 (ADAMTS16).